The sequence spans 831 residues: Probable glucan 1,3-beta-glucosidase D (831 aa).

6 stretches are compositionally biased toward basic and acidic residues: residues 1 to 24 (MPSH…YREV), 44 to 56 (RRDD…RSHE), 79 to 93 (RSHD…RSRA), 102 to 115 (SRRD…EYRR), 137 to 151 (RDGQ…DREA), and 198 to 213 (QRER…LESK). Disordered stretches follow at residues 1–179 (MPSH…SGSH) and 192–241 (HYDE…GQSK). Residues 1-297 (MPSHSRSRDR…AQPPFWKRKK (297 aa)) are Cytoplasmic-facing. Residues 298 to 318 (WWIVIGVLVVVLAIVIPVAVV) form a helical; Signal-anchor for type II membrane protein membrane-spanning segment. Topologically, residues 319 to 831 (MSKKHGHDDD…PSFGDLPEYY (513 aa)) are extracellular. N-linked (GlcNAc...) asparagine glycosylation is found at asparagine 376, asparagine 381, asparagine 393, asparagine 410, asparagine 442, asparagine 546, and asparagine 558. Residue glutamate 597 is the Proton donor of the active site. Asparagine 610, asparagine 636, asparagine 669, and asparagine 689 each carry an N-linked (GlcNAc...) asparagine glycan. The active-site Nucleophile is glutamate 702.

Belongs to the glycosyl hydrolase 5 (cellulase A) family.

Its subcellular location is the cell membrane. The enzyme catalyses Successive hydrolysis of beta-D-glucose units from the non-reducing ends of (1-&gt;3)-beta-D-glucans, releasing alpha-glucose.. Functionally, glucosidase involved in the degradation of cellulosic biomass. Active on lichenan. This chain is Probable glucan 1,3-beta-glucosidase D (exgD), found in Aspergillus flavus (strain ATCC 200026 / FGSC A1120 / IAM 13836 / NRRL 3357 / JCM 12722 / SRRC 167).